The following is a 594-amino-acid chain: Glutamate decarboxylase 1 (594 aa).

Low complexity predominate over residues 1-13; the sequence is MASSTPSSSATSS. Positions 1-25 are disordered; the sequence is MASSTPSSSATSSNAGPDPNTTNLR. Ser-78 carries the post-translational modification Phosphoserine. A 4-aminobutanoate-binding site is contributed by 190-192; the sequence is QLS. Lys-405 carries the post-translational modification N6-(pyridoxal phosphate)lysine. Arg-567 provides a ligand contact to 4-aminobutanoate.

It belongs to the group II decarboxylase family. As to quaternary structure, homodimer. Requires pyridoxal 5'-phosphate as cofactor.

The enzyme catalyses L-glutamate + H(+) = 4-aminobutanoate + CO2. Its function is as follows. Catalyzes the synthesis of the inhibitory neurotransmitter gamma-aminobutyric acid (GABA) with pyridoxal 5'-phosphate as cofactor. The protein is Glutamate decarboxylase 1 (GAD1) of Sus scrofa (Pig).